Here is a 151-residue protein sequence, read N- to C-terminus: Ribosome maturation factor RimP (151 aa).

This sequence belongs to the RimP family.

The protein localises to the cytoplasm. Its function is as follows. Required for maturation of 30S ribosomal subunits. This is Ribosome maturation factor RimP from Caldicellulosiruptor saccharolyticus (strain ATCC 43494 / DSM 8903 / Tp8T 6331).